Reading from the N-terminus, the 254-residue chain is MNLKPQNNLLTNENIDHVDIPENDIPMSITEHLEELRQRTLFVFLFFLFATTISFTQIKIIVAILQAPAVGIKFLQLAPGEYFFSSIKVAIYCGIVATTPFAVYQVILYILPGLTGKERKIILPLLISSVLLFITGGIFAYFVLAPAALTFLISYGSDIVEPLWSFEQYFDFILLLLLSTGLAFEIPIIQLLLGVSGTFSSSQMIRAWRYIIIIATIAGAILTPSTDPVTQLIMSSAVLLLYFGGIVILLVLKK.

Transmembrane regions (helical) follow at residues 41 to 61 (LFVF…IKII), 64 to 84 (ILQA…EYFF), 91 to 111 (IYCG…LYIL), 125 to 145 (LLIS…FVLA), 146 to 166 (PAAL…LWSF), 172 to 192 (FILL…IQLL), 204 to 224 (MIRA…ILTP), and 232 to 252 (LIMS…LLVL).

It belongs to the TatC family.

It localises to the plastid. Its subcellular location is the chloroplast membrane. This is an uncharacterized protein from Pyropia yezoensis (Susabi-nori).